Reading from the N-terminus, the 142-residue chain is Transcriptional regulator MraZ (142 aa).

SpoVT-AbrB domains are found at residues Glu-5–Glu-47 and Ala-76–Lys-119.

The protein belongs to the MraZ family. In terms of assembly, forms oligomers.

It is found in the cytoplasm. Its subcellular location is the nucleoid. The polypeptide is Transcriptional regulator MraZ (Clostridium beijerinckii (strain ATCC 51743 / NCIMB 8052) (Clostridium acetobutylicum)).